The following is a 141-amino-acid chain: Aspartate 1-decarboxylase (141 aa).

Residue Ser-25 is the Schiff-base intermediate with substrate; via pyruvic acid of the active site. Position 25 is a pyruvic acid (Ser) (Ser-25). Thr-57 lines the substrate pocket. Residue Tyr-58 is the Proton donor of the active site. 73–75 contacts substrate; the sequence is GAA.

Belongs to the PanD family. In terms of assembly, heterooctamer of four alpha and four beta subunits. Pyruvate serves as cofactor. Post-translationally, is synthesized initially as an inactive proenzyme, which is activated by self-cleavage at a specific serine bond to produce a beta-subunit with a hydroxyl group at its C-terminus and an alpha-subunit with a pyruvoyl group at its N-terminus.

The protein resides in the cytoplasm. The enzyme catalyses L-aspartate + H(+) = beta-alanine + CO2. Its pathway is cofactor biosynthesis; (R)-pantothenate biosynthesis; beta-alanine from L-aspartate: step 1/1. Its function is as follows. Catalyzes the pyruvoyl-dependent decarboxylation of aspartate to produce beta-alanine. The protein is Aspartate 1-decarboxylase of Pseudarthrobacter chlorophenolicus (strain ATCC 700700 / DSM 12829 / CIP 107037 / JCM 12360 / KCTC 9906 / NCIMB 13794 / A6) (Arthrobacter chlorophenolicus).